The chain runs to 184 residues: MKLIVGLGNPGEKYAKTKHNVGYWVLDLLAEKLALSFDQKTENGIYVKQPDFILAKPTTFMNKSGDFVEELIKFYKINTQDLMIIYDDMNFEVGQAAIKTTGSAGGQRGMAHIIEKCKTKEIKRLKIGISRGENAKEYVLSPFLPKDNAKIKLVIEEAANILIFYLSNSFITTIEKFNANKNKV.

Residue Tyr-14 participates in tRNA binding. His-19 functions as the Proton acceptor in the catalytic mechanism. Residues Phe-60 and Asn-62 each contribute to the tRNA site.

Belongs to the PTH family. Monomer.

It is found in the cytoplasm. It carries out the reaction an N-acyl-L-alpha-aminoacyl-tRNA + H2O = an N-acyl-L-amino acid + a tRNA + H(+). Its function is as follows. Hydrolyzes ribosome-free peptidyl-tRNAs (with 1 or more amino acids incorporated), which drop off the ribosome during protein synthesis, or as a result of ribosome stalling. In terms of biological role, catalyzes the release of premature peptidyl moieties from peptidyl-tRNA molecules trapped in stalled 50S ribosomal subunits, and thus maintains levels of free tRNAs and 50S ribosomes. In Mesomycoplasma hyopneumoniae (strain 232) (Mycoplasma hyopneumoniae), this protein is Peptidyl-tRNA hydrolase.